The primary structure comprises 521 residues: MNLPQQQPPAAAPQQPQSRRSPVSPQLQQQHQAAAAAFLQQRNSYNHHQPLLKQSPWSNHQNSGWGTASMSWGAMHGRDHRRSGNMGIPGTMNQISPLKKPFSGNVIAPPKFTRSTPSLTPKSWIEDNVFRTDNNSNTLLPLQVRSSLQLPAWGSDSLQDSWCTAAGTSRIDQDRSRMYDSLNMHSLENSLIDIMRAEHDPLKGRLSYPHPGTDNLLMLNGRSSLFPIDDSLLDDGHSDQVGVLNSPTCYSAHQNGERIERFSRKVFVGGLPPDIDEDEITASFRRFGPLVVDWPHKAESKSYFPPKGYAFLLFQEESSVQALIDACIEEDGKLYLCVSSPTIKDKPVQIRPWNLSDSDFVMDGSQPLDPRKTIFVGGVPRPLRAVELAMIMDRLYGGVCYAGIDTDPELKYPKGAGRVAFSNQQSYIAAISARFVQLQHGDIDKRVEVKPYVLDDQMCDECQGARCGGKFAPFFCANVTCLQYYCEFCWANIHSRAGREFHKPLVKEGADRPRQIHFRWN.

Pro residues predominate over residues methionine 1–alanine 11. Disordered regions lie at residues methionine 1–alanine 35 and proline 50–isoleucine 88. Residues alanine 12 to alanine 35 show a composition bias toward low complexity. The residue at position 21 (serine 21) is a Phosphoserine. The span at serine 55–methionine 70 shows a compositional bias: polar residues. 2 consecutive RRM domains span residues arginine 264 to leucine 355 and lysine 372 to leucine 454.

It belongs to the RRM CPEB family. In terms of assembly, interacts with TENT2/GLD2. As to expression, expressed in embryo, cerebellum, salivary gland, thymus, heart, liver, lung, spleen, kidney, intestine, ovary and round spermatids. Weakly expressed in granular cells of dentate gyrus and the pyramidal cells of CA3 and CA1 of the hippocampus.

The protein resides in the cytoplasm. May play a role in translational regulation of stored mRNAs in transcriptionally inactive haploid spermatids. Binds to poly(U) RNA oligomers. Required for cell cycle progression, specifically for the transition from metaphase to anaphase. The protein is Cytoplasmic polyadenylation element-binding protein 2 (Cpeb2) of Mus musculus (Mouse).